We begin with the raw amino-acid sequence, 215 residues long: Probable transaldolase 1 (215 aa).

The active-site Schiff-base intermediate with substrate is Lys83.

The protein belongs to the transaldolase family. Type 3B subfamily.

The protein resides in the cytoplasm. The enzyme catalyses D-sedoheptulose 7-phosphate + D-glyceraldehyde 3-phosphate = D-erythrose 4-phosphate + beta-D-fructose 6-phosphate. It functions in the pathway carbohydrate degradation; pentose phosphate pathway; D-glyceraldehyde 3-phosphate and beta-D-fructose 6-phosphate from D-ribose 5-phosphate and D-xylulose 5-phosphate (non-oxidative stage): step 2/3. Functionally, transaldolase is important for the balance of metabolites in the pentose-phosphate pathway. This chain is Probable transaldolase 1, found in Bacillus cereus (strain ATCC 14579 / DSM 31 / CCUG 7414 / JCM 2152 / NBRC 15305 / NCIMB 9373 / NCTC 2599 / NRRL B-3711).